Here is a 542-residue protein sequence, read N- to C-terminus: MLO-like protein 7 (542 aa).

At Met1–Thr38 the chain is on the extracellular side. The chain crosses the membrane as a helical span at residues Trp39 to Leu59. Residues Gln60–Lys82 are Cytoplasmic-facing. A helical membrane pass occupies residues Ala83–Leu103. Topologically, residues Lys104–His165 are extracellular. The chain crosses the membrane as a helical span at residues Ile166–Ser186. Topologically, residues Arg187–Lys288 are cytoplasmic. Residues Leu289–Val309 traverse the membrane as a helical segment. Residues Asn310 to Leu315 are Extracellular-facing. Residues Phe316 to Ile336 traverse the membrane as a helical segment. The Cytoplasmic portion of the chain corresponds to Met337 to His374. Residues Leu375–Tyr395 traverse the membrane as a helical segment. The Extracellular segment spans residues Ser396–Leu414. A helical membrane pass occupies residues Phe415–Val435. Over Thr436–Ser542 the chain is Cytoplasmic. The segment at Glu449 to Arg470 is calmodulin-binding.

The protein belongs to the MLO family. As to expression, restricted to pollen, synergids, pistils and immature anthers. Also detected in seedlings, leaves, stems and inflorescens.

The protein localises to the cell membrane. The protein resides in the endomembrane system. Functionally, may be involved in modulation of pathogen defense and leaf cell death. Activity seems to be regulated by Ca(2+)-dependent calmodulin binding and seems not to require heterotrimeric G proteins. Controls pollen tube reception in the female gametophyte synergids. In Arabidopsis thaliana (Mouse-ear cress), this protein is MLO-like protein 7 (MLO7).